We begin with the raw amino-acid sequence, 314 residues long: Phosphoribosylaminoimidazole-succinocarboxamide synthase (314 aa).

It belongs to the SAICAR synthetase family.

It carries out the reaction 5-amino-1-(5-phospho-D-ribosyl)imidazole-4-carboxylate + L-aspartate + ATP = (2S)-2-[5-amino-1-(5-phospho-beta-D-ribosyl)imidazole-4-carboxamido]succinate + ADP + phosphate + 2 H(+). The protein operates within purine metabolism; IMP biosynthesis via de novo pathway; 5-amino-1-(5-phospho-D-ribosyl)imidazole-4-carboxamide from 5-amino-1-(5-phospho-D-ribosyl)imidazole-4-carboxylate: step 1/2. This chain is Phosphoribosylaminoimidazole-succinocarboxamide synthase, found in Bacteroides fragilis (strain ATCC 25285 / DSM 2151 / CCUG 4856 / JCM 11019 / LMG 10263 / NCTC 9343 / Onslow / VPI 2553 / EN-2).